Reading from the N-terminus, the 908-residue chain is Isoleucine--tRNA ligase (908 aa).

The short motif at 59–69 is the 'HIGH' region element; that stretch reads PYANGDLHIGH. E554 is an L-isoleucyl-5'-AMP binding site. The short motif at 595 to 599 is the 'KMSKS' region element; that stretch reads KMSKS. K598 provides a ligand contact to ATP. C882, C885, C898, and C901 together coordinate Zn(2+).

Belongs to the class-I aminoacyl-tRNA synthetase family. IleS type 1 subfamily. Monomer. Zn(2+) is required as a cofactor.

The protein localises to the cytoplasm. The enzyme catalyses tRNA(Ile) + L-isoleucine + ATP = L-isoleucyl-tRNA(Ile) + AMP + diphosphate. Functionally, catalyzes the attachment of isoleucine to tRNA(Ile). As IleRS can inadvertently accommodate and process structurally similar amino acids such as valine, to avoid such errors it has two additional distinct tRNA(Ile)-dependent editing activities. One activity is designated as 'pretransfer' editing and involves the hydrolysis of activated Val-AMP. The other activity is designated 'posttransfer' editing and involves deacylation of mischarged Val-tRNA(Ile). The chain is Isoleucine--tRNA ligase from Mesoplasma florum (strain ATCC 33453 / NBRC 100688 / NCTC 11704 / L1) (Acholeplasma florum).